Reading from the N-terminus, the 220-residue chain is Protein-L-isoaspartate O-methyltransferase (220 aa).

The active site involves Ser-65.

The protein belongs to the methyltransferase superfamily. L-isoaspartyl/D-aspartyl protein methyltransferase family.

Its subcellular location is the cytoplasm. It carries out the reaction [protein]-L-isoaspartate + S-adenosyl-L-methionine = [protein]-L-isoaspartate alpha-methyl ester + S-adenosyl-L-homocysteine. Functionally, catalyzes the methyl esterification of L-isoaspartyl residues in peptides and proteins that result from spontaneous decomposition of normal L-aspartyl and L-asparaginyl residues. It plays a role in the repair and/or degradation of damaged proteins. This Pyrococcus horikoshii (strain ATCC 700860 / DSM 12428 / JCM 9974 / NBRC 100139 / OT-3) protein is Protein-L-isoaspartate O-methyltransferase (pcm).